The primary structure comprises 556 residues: Adenine deaminase (556 aa).

This sequence belongs to the metallo-dependent hydrolases superfamily. Adenine deaminase family. Mn(2+) serves as cofactor.

The catalysed reaction is adenine + H2O + H(+) = hypoxanthine + NH4(+). This is Adenine deaminase from Archaeoglobus fulgidus (strain ATCC 49558 / DSM 4304 / JCM 9628 / NBRC 100126 / VC-16).